Consider the following 86-residue polypeptide: Small ribosomal subunit protein bS18c (86 aa).

This sequence belongs to the bacterial ribosomal protein bS18 family. In terms of assembly, part of the 30S ribosomal subunit.

The protein resides in the plastid. The protein localises to the chloroplast. This is Small ribosomal subunit protein bS18c from Pseudotsuga menziesii (Douglas-fir).